The chain runs to 270 residues: tRNA pseudouridine synthase A (270 aa).

The active-site Nucleophile is D60. An RNA binding region spans residues 107 to 111; it reads FHARF. Position 118 (Y118) interacts with substrate. The interaction with tRNA stretch occupies residues 168-172; that stretch reads QCQSR.

The protein belongs to the tRNA pseudouridine synthase TruA family. As to quaternary structure, homodimer.

The enzyme catalyses uridine(38/39/40) in tRNA = pseudouridine(38/39/40) in tRNA. Formation of pseudouridine at positions 38, 39 and 40 in the anticodon stem and loop of transfer RNAs. The chain is tRNA pseudouridine synthase A from Citrobacter koseri (strain ATCC BAA-895 / CDC 4225-83 / SGSC4696).